We begin with the raw amino-acid sequence, 157 residues long: Transcription elongation factor GreA (157 aa).

The stretch at 47 to 75 (SGEYEDAKKAQALLEGRIRELKHLLSRAE) forms a coiled coil.

This sequence belongs to the GreA/GreB family.

Necessary for efficient RNA polymerase transcription elongation past template-encoded arresting sites. The arresting sites in DNA have the property of trapping a certain fraction of elongating RNA polymerases that pass through, resulting in locked ternary complexes. Cleavage of the nascent transcript by cleavage factors such as GreA or GreB allows the resumption of elongation from the new 3'terminus. GreA releases sequences of 2 to 3 nucleotides. In Chloroflexus aurantiacus (strain ATCC 29366 / DSM 635 / J-10-fl), this protein is Transcription elongation factor GreA.